The sequence spans 498 residues: COP9 signalosome complex subunit 1 (498 aa).

Residues 249 to 430 (SYLEAANSFI…HVLVSTQGDK (182 aa)) form the PCI domain.

It belongs to the CSN1 family. In terms of assembly, component of the COP9 signalosome (CSN) complex.

Its subcellular location is the cytoplasm. The protein localises to the nucleus. Its function is as follows. Component of the COP9 signalosome (CSN) complex that acts as an regulator of the ubiquitin (Ubl) conjugation pathway by mediating the deneddylation of the cullin subunit of SCF-type E3 ubiquitin-protein ligase complexes. The CSN complex seems to link protein degradation to sexual development. Required for fruit body formation. The sequence is that of COP9 signalosome complex subunit 1 (csnA) from Emericella nidulans (strain FGSC A4 / ATCC 38163 / CBS 112.46 / NRRL 194 / M139) (Aspergillus nidulans).